The chain runs to 287 residues: Nematocyst expressed protein 6 (287 aa).

The signal sequence occupies residues 1–20 (MKGFIFAGVLVSALICLAEG). The region spanning 53 to 249 (RAALRDRYLW…RQTNLMYKCN (197 aa)) is the Peptidase M12A domain. Disulfide bonds link C95–C248 and C116–C139. Position 146 (H146) interacts with Zn(2+). E147 is a catalytic residue. H150 and H156 together coordinate Zn(2+). The interval 249-287 (NAQGDSELQPVNDEDEDKDGGDSKKKPDPKGPKPGEIEE) is disordered. Residues 268 to 287 (GGDSKKKPDPKGPKPGEIEE) show a composition bias toward basic and acidic residues.

The cofactor is Zn(2+). Nematocyte and pharyngeal gland.

It localises to the secreted. Its subcellular location is the nematocyst. Functionally, metalloprotease. The protein is Nematocyst expressed protein 6 of Nematostella vectensis (Starlet sea anemone).